The chain runs to 146 residues: Large ribosomal subunit protein bL19 (146 aa).

Residues 119-146 (DYRKKGEKGVEKVETTPVSADIETQVAE) form a disordered region.

The protein belongs to the bacterial ribosomal protein bL19 family.

Its function is as follows. This protein is located at the 30S-50S ribosomal subunit interface and may play a role in the structure and function of the aminoacyl-tRNA binding site. This Bartonella tribocorum (strain CIP 105476 / IBS 506) protein is Large ribosomal subunit protein bL19.